The chain runs to 275 residues: 5'-nucleotidase SurE (275 aa).

Residues aspartate 14, aspartate 15, serine 46, and asparagine 104 each coordinate a divalent metal cation.

Belongs to the SurE nucleotidase family. Requires a divalent metal cation as cofactor.

Its subcellular location is the cytoplasm. The catalysed reaction is a ribonucleoside 5'-phosphate + H2O = a ribonucleoside + phosphate. In terms of biological role, nucleotidase that shows phosphatase activity on nucleoside 5'-monophosphates. In Synechocystis sp. (strain ATCC 27184 / PCC 6803 / Kazusa), this protein is 5'-nucleotidase SurE.